Consider the following 270-residue polypeptide: Thymidylate synthase (270 aa).

Residues arginine 28 and 133–134 (RR) each bind dUMP. Catalysis depends on cysteine 153, which acts as the Nucleophile. Residues 173–176 (RSAD), asparagine 184, and 214–216 (HIY) each bind dUMP. (6R)-5,10-methylene-5,6,7,8-tetrahydrofolate is bound at residue aspartate 176. Alanine 269 provides a ligand contact to (6R)-5,10-methylene-5,6,7,8-tetrahydrofolate.

The protein belongs to the thymidylate synthase family. Bacterial-type ThyA subfamily. As to quaternary structure, homodimer.

Its subcellular location is the cytoplasm. The catalysed reaction is dUMP + (6R)-5,10-methylene-5,6,7,8-tetrahydrofolate = 7,8-dihydrofolate + dTMP. It participates in pyrimidine metabolism; dTTP biosynthesis. Functionally, catalyzes the reductive methylation of 2'-deoxyuridine-5'-monophosphate (dUMP) to 2'-deoxythymidine-5'-monophosphate (dTMP) while utilizing 5,10-methylenetetrahydrofolate (mTHF) as the methyl donor and reductant in the reaction, yielding dihydrofolate (DHF) as a by-product. This enzymatic reaction provides an intracellular de novo source of dTMP, an essential precursor for DNA biosynthesis. The polypeptide is Thymidylate synthase (Corynebacterium diphtheriae (strain ATCC 700971 / NCTC 13129 / Biotype gravis)).